Consider the following 82-residue polypeptide: uncharacterized protein (82 aa).

A run of 3 helical transmembrane segments spans residues 1–21 (MSAS…SVST), 22–42 (VLLG…LAAF), and 62–82 (WRLL…LTLL).

The protein localises to the cell membrane. This is an uncharacterized protein from Stutzerimonas stutzeri (Pseudomonas stutzeri).